A 1178-amino-acid polypeptide reads, in one-letter code: DNA-directed RNA polymerase subunit beta (1178 aa).

This sequence belongs to the RNA polymerase beta chain family. The RNAP catalytic core consists of 2 alpha, 1 beta, 1 beta' and 1 omega subunit. When a sigma factor is associated with the core the holoenzyme is formed, which can initiate transcription.

It carries out the reaction RNA(n) + a ribonucleoside 5'-triphosphate = RNA(n+1) + diphosphate. Functionally, DNA-dependent RNA polymerase catalyzes the transcription of DNA into RNA using the four ribonucleoside triphosphates as substrates. The sequence is that of DNA-directed RNA polymerase subunit beta from Treponema pallidum (strain Nichols).